The following is a 502-amino-acid chain: Glycerol kinase (502 aa).

Thr-14 lines the ADP pocket. ATP-binding residues include Thr-14, Thr-15, and Ser-16. Residue Thr-14 participates in sn-glycerol 3-phosphate binding. Arg-18 contacts ADP. Residues Arg-84, Glu-85, Tyr-136, and Asp-246 each contribute to the sn-glycerol 3-phosphate site. Glycerol contacts are provided by Arg-84, Glu-85, Tyr-136, Asp-246, and Gln-247. ADP-binding residues include Thr-268 and Gly-311. The ATP site is built by Thr-268, Gly-311, Gln-315, and Gly-412. Positions 412 and 416 each coordinate ADP.

It belongs to the FGGY kinase family. As to quaternary structure, homotetramer and homodimer (in equilibrium). Heterodimer with EIIA-Glc. Binds 1 zinc ion per glycerol kinase EIIA-Glc dimer. The zinc ion is important for dimerization.

The catalysed reaction is glycerol + ATP = sn-glycerol 3-phosphate + ADP + H(+). The protein operates within polyol metabolism; glycerol degradation via glycerol kinase pathway; sn-glycerol 3-phosphate from glycerol: step 1/1. Activity of this regulatory enzyme is affected by several metabolites. Allosterically and non-competitively inhibited by fructose 1,6-bisphosphate (FBP) and unphosphorylated phosphocarrier protein EIIA-Glc (III-Glc), an integral component of the bacterial phosphotransferase (PTS) system. Functionally, key enzyme in the regulation of glycerol uptake and metabolism. Catalyzes the phosphorylation of glycerol to yield sn-glycerol 3-phosphate. The chain is Glycerol kinase from Shigella dysenteriae serotype 1 (strain Sd197).